Reading from the N-terminus, the 413-residue chain is Hemolin (413 aa).

A signal peptide spans 1 to 19 (MAFKSIAVLSACIIVGSAL). Ig-like C2-type domains lie at 25–112 (PVLK…RVIS), 122–211 (PAKT…EEVV), 233–322 (PQYV…LKLT), and 327–413 (PKYE…VQVN). Intrachain disulfides connect C46–C97, C140–C199, C252–C305, and C349–C395. An N-linked (GlcNAc...) asparagine glycan is attached at N283.

This sequence belongs to the hemolin family. In terms of tissue distribution, hemolymph.

The protein resides in the secreted. The protein localises to the extracellular space. Its function is as follows. Insect-immune protein. Forms a protein complex at the bacterial surface. Can inhibit hemocyte aggregation. The protein is Hemolin of Hyalophora cecropia (Cecropia moth).